Consider the following 688-residue polypeptide: PTS system glucoside-specific EIICBA component (688 aa).

Positions K3–D427 constitute a PTS EIIC type-1 domain. A run of 10 helical transmembrane segments spans residues I12–F32, L81–M101, L137–L157, F182–W202, L223–I243, A284–I304, V315–P335, F340–L360, L364–G384, and L395–I415. Positions A438–K519 constitute a PTS EIIB type-1 domain. The active-site Phosphocysteine intermediate; for EIIB activity is C460. The PTS EIIA type-1 domain maps to D560–N664. The active-site Tele-phosphohistidine intermediate; for EIIA activity is the H612.

It localises to the cell membrane. The phosphoenolpyruvate-dependent sugar phosphotransferase system (sugar PTS), a major carbohydrate active -transport system, catalyzes the phosphorylation of incoming sugar substrates concomitantly with their translocation across the cell membrane. This system is involved in alpha- and beta-glucoside transport. In Staphylococcus aureus (strain USA300), this protein is PTS system glucoside-specific EIICBA component (glcB).